A 130-amino-acid chain; its full sequence is MSSKATKTVKSKFDIINNQLRDDLIDFRSGDTIRVDVKIKEGDKFRIQSFEGLVIKTQGSGITYSVVVRKMSNGVFVERTFPLHSPIIDSVTLIKRGKVRRSRIYYIRKLSGKAARIKEIMPTKQAKEIK.

The protein belongs to the bacterial ribosomal protein bL19 family.

Its function is as follows. This protein is located at the 30S-50S ribosomal subunit interface and may play a role in the structure and function of the aminoacyl-tRNA binding site. This Mycoplasma capricolum subsp. capricolum (strain California kid / ATCC 27343 / NCTC 10154) protein is Large ribosomal subunit protein bL19.